The following is a 768-amino-acid chain: Translation initiation factor IF-2, chloroplastic (768 aa).

Disordered regions lie at residues 1-20, 54-77, and 155-176; these read MFLN…SNIN, KSES…DKKS, and KKVA…PPES. The segment covering 54 to 65 has biased composition (basic and acidic residues); that stretch reads KSESHTGGEQHL. Over residues 160–176 the composition is skewed to polar residues; sequence TPSQNSASIQSNSPPES. Positions 261–434 constitute a tr-type G domain; sequence KRPPIVTVMG…TLLAELEDLK (174 aa). Residues 270–277, 320–324, and 374–377 contribute to the GTP site; these read GHVDHGKT, DTPGH, and SKID.

The protein belongs to the TRAFAC class translation factor GTPase superfamily. Classic translation factor GTPase family. IF-2 subfamily.

It is found in the plastid. The protein resides in the chloroplast. In terms of biological role, one of the essential components for the initiation of protein synthesis. Protects formylmethionyl-tRNA from spontaneous hydrolysis and promotes its binding to the 30S ribosomal subunits. Also involved in the hydrolysis of GTP during the formation of the 70S ribosomal complex. In Pyropia yezoensis (Susabi-nori), this protein is Translation initiation factor IF-2, chloroplastic (infB).